A 1237-amino-acid chain; its full sequence is MPPAYQSAFHKIISRDKGVFEGHNFLVSVDTINWIHVNTLTITEQGQLFSSDSKDNHYLLLQSLQSCFIQIYPDSNISGSGKSSISQPPPTTSTRRNLLRKSSNLNSSDQSHSKSSEDNEHQPPAILIKTFDNDKLYIRIPSKANFGNLLSCLMVWQNLKPQGLAKKWYCENKVIEGFNPNAPIYELLVCRFKIYGPLPNKYKNLNIVPGPKAPVYQQKMDDFKANFDNSYIITPQISSDNHNSINEGWFYAMGALNSHGILNFISELDGTLLYSIDIKQILSSEIREMHNSIFNSSNILFIGQLKELRYNNVIRTLSTLTPDQLLTPFLTRDGKIIPNNQRILIEFPLHIDLEDWFVGLNYFAKREYIGSFDNESKLIHNVEHPQLYDFSKANFRVSKKMSIDIIEAKFENTETNKSGKIYAEVRMWGFPWSRTAIVNHTNNPFWKEEFSTDLPISTQMVHILIKKCSFNDSSYSTGDKLIGTVYVTPDILTKQIKTTSTIMTSSESSQAIQMNTVPLSSMASNSNAGLDIVRLTINDPNNIPIGKLLLEVHLQEYHILSPSVFKPLEKMLVNAPMKDLIKFCNENVPSSDFERVSLVLLDIFQSLEVEDDWFKSLMEVELVNVDIMTRKNYHQRNSQDQAVSNSKTQQQSSHNNVFNTLFRGSSIFSKSLEKYNLRIGQEYLEKVFGDFFAKISNEKKNCEVDPRYVRIQERALRKGKSIHEATGLENGQNEDVSDDDDDDDDNSSDDDADYNAEKERERNERIKQMVEENFQNLYGYVEEIWYKIYITSNDLPDQIKLQLKNFRTKVELVCDPEDKVTSLNCLSAFIFLRFFCPAILNPKLFYLAKNHQTGSTQRTLTLIAKILLNFANRQEFSPHKEPHLVRMNVFLRKHTPEIYDYFDKLTGRKNDFNEKILDLSHEVKRFDLGLDKTSNELPTTPYLIDKYLRLTEIVHLLDYSKYVKNIGNNNNGSMSNLGTPVNSPSRDMEREQDRSRSRSQSGTPDLDPILNLSDLKLNYENKYQIGSLEFEKSEFLELTGDNETEGFIKSLCKGNEEIFSFINSNITLKDIQKQSTKIMNKIQELEIYLENYEFPNNYKDQIIWDSFTDDIMNKCWLDTSRNCLIYSDHVPSSNNQYKKLVDHAFSGLKLKFNDHQKLNGNSTMNSLINNGGMGNRNGHDVNGHNNNNNNNNNNTGDGYNETDRNQRLSSTFSTISIGSAIKPNTSKNPFKKWLRKN.

Residues 79–110 are compositionally biased toward low complexity; the sequence is GSGKSSISQPPPTTSTRRNLLRKSSNLNSSDQ. The interval 79 to 124 is disordered; the sequence is GSGKSSISQPPPTTSTRRNLLRKSSNLNSSDQSHSKSSEDNEHQPP. Over residues 111 to 121 the composition is skewed to basic and acidic residues; that stretch reads SHSKSSEDNEH. One can recognise a C2 domain in the interval 381–503; sequence NVEHPQLYDF…KQIKTTSTIM (123 aa). Positions 637–905 constitute a Ras-GAP domain; the sequence is NSQDQAVSNS…PEIYDYFDKL (269 aa). Disordered stretches follow at residues 721-762 and 969-1007; these read SIHE…ERER and NNNGSMSNLGTPVNSPSRDMEREQDRSRSRSQSGTPDLD. Positions 735-754 are enriched in acidic residues; the sequence is DVSDDDDDDDDNSSDDDADY. Over residues 986-996 the composition is skewed to basic and acidic residues; sequence RDMEREQDRSR. Residues 1065–1093 adopt a coiled-coil conformation; the sequence is NITLKDIQKQSTKIMNKIQELEIYLENYE. The tract at residues 1170-1204 is disordered; that stretch reads NGGMGNRNGHDVNGHNNNNNNNNNNTGDGYNETDR. A compositionally biased stretch (low complexity) spans 1183–1199; the sequence is GHNNNNNNNNNNTGDGY.

The protein localises to the cytoplasm. Its subcellular location is the cell cortex. The protein resides in the cell tip. It is found in the cell septum. Its function is as follows. GTPase activating protein (GAP) for RSR1 which is involved in the polarization of yeast and hyphal cells. Directs the site of new daughter cell growth in yeast and hyphal cells. Important for hyphae to maintain linear growth and necessary for hyphal responses to directional cues in the environment (tropisms). Required for correct localization of the septin rings and stabilization of the polarisome at hyphal tips. Involved in cell adhesion. This chain is GTPase activating protein BUD2 (BUD2), found in Candida albicans (strain SC5314 / ATCC MYA-2876) (Yeast).